The chain runs to 310 residues: Small ribosomal subunit biogenesis GTPase RsgA (310 aa).

One can recognise a CP-type G domain in the interval 77-236; that stretch reads KNELKRPNIA…IADTPGFSKL (160 aa). GTP is bound by residues 126–129 and 179–187; these read SKID and GQTGVGKST. C260, C266, H268, and C274 together coordinate Zn(2+).

It belongs to the TRAFAC class YlqF/YawG GTPase family. RsgA subfamily. As to quaternary structure, monomer. Associates with 30S ribosomal subunit, binds 16S rRNA. It depends on Zn(2+) as a cofactor.

The protein localises to the cytoplasm. One of several proteins that assist in the late maturation steps of the functional core of the 30S ribosomal subunit. Helps release RbfA from mature subunits. May play a role in the assembly of ribosomal proteins into the subunit. Circularly permuted GTPase that catalyzes slow GTP hydrolysis, GTPase activity is stimulated by the 30S ribosomal subunit. The polypeptide is Small ribosomal subunit biogenesis GTPase RsgA (Phytoplasma australiense).